We begin with the raw amino-acid sequence, 69 residues long: U5-agatoxin-Ao1a (69 aa).

Residues Met1–Ala20 form the signal peptide. The propeptide occupies Ile21–Arg34. 2 disulfide bridges follow: Cys36–Cys52 and Cys43–Cys57.

It belongs to the neurotoxin 01 (U2-agtx) family. Post-translationally, does not contain a cysteine at position 61 which disrupts the cysteine framework. Expressed by the venom gland.

The protein resides in the secreted. This Agelena orientalis (Funnel-web spider) protein is U5-agatoxin-Ao1a.